The primary structure comprises 1762 residues: Kinase D-interacting substrate of 220 kDa (1762 aa).

Over 1–508 the chain is Cytoplasmic; that stretch reads MSVLISQSVI…WLIVFLTLLL (508 aa). ANK repeat units follow at residues 45-74, 78-107, 111-140, 145-174, 178-207, 211-240, 244-273, 277-306, 310-339, 343-372, and 376-405; these read AAEQ…NWTA, ASKE…GWTA, ACYK…SVYP, AGRG…TTPL, ARKG…MTAL, VKGG…NTAL, SKEG…DTVL, VRGG…KTAL, VEKG…ETPL, TKMR…DTPL, and IRGR…KAGE. One can recognise a KAP NTPase domain in the interval 440–953; the sequence is YDLYSSALAD…NIVSVTGRLL (514 aa). A helical transmembrane segment spans residues 509–529; that stretch reads CGGLGLVFAFTVDTNLAIAIS. Residues 530-533 lie on the Extracellular side of the membrane; sequence LSFL. The helical transmembrane segment at 534–554 threads the bilayer; it reads ALIYIFFIVIYFGGRREGESW. The Cytoplasmic segment spans residues 555–668; the sequence is NWAWALSTRL…SFVIFLFIVG (114 aa). A helical membrane pass occupies residues 669–689; that stretch reads CIIAGITLLAIFRVDPKHLTV. Residues 690 to 696 are Extracellular-facing; that stretch reads NAILISI. The chain crosses the membrane as a helical span at residues 697 to 717; it reads ASVVGLAFVLNCRTWWQVLDS. The Cytoplasmic portion of the chain corresponds to 718 to 1680; that stretch reads LLNSQRKRLH…TPSTVTLNNN (963 aa). Phosphoserine occurs at positions 882 and 885. Phosphothreonine is present on threonine 914. Serine 918 is modified (phosphoserine; by PKD). Residues 1089-1092 are mediates interaction with CRKL; the sequence is PRPP. Residues serine 1163, serine 1288, serine 1344, serine 1351, serine 1353, serine 1354, and serine 1357 each carry the phosphoserine modification. Disordered regions lie at residues 1279–1305, 1336–1358, 1390–1440, and 1452–1556; these read DPRF…HTEL, RHSN…LNSQ, EGGT…DGRK, and YSSS…EPIR. A compositionally biased stretch (polar residues) spans 1338–1350; the sequence is SNLSWQSQTRRTP. Low complexity predominate over residues 1395–1422; the sequence is SSTISGRSSPHSTYYIGQSSSGGSIHST. Over residues 1423–1440 the composition is skewed to basic and acidic residues; sequence LEQERGKEGELKQEDGRK. Positions 1452 to 1462 are enriched in polar residues; sequence YSSSGVSTNEA. A phosphoserine mark is found at serine 1513, serine 1518, serine 1547, and serine 1566. The span at 1514-1524 shows a compositional bias: acidic residues; that stretch reads DEDESGTEESD. Over residues 1529–1553 the composition is skewed to basic and acidic residues; sequence LKDDKDKKAEGKAERVCKSPEHSAE. Positions 1571–1628 are disordered; it reads DKKDSSDSGVRSNESSPNHSLHNEAADDSQLEKANLIELEDEGHSGKRGMPHSLSGLQ. The segment covering 1579 to 1590 has biased composition (polar residues); that stretch reads GVRSNESSPNHS. Residues serine 1615 and serine 1625 each carry the phosphoserine modification. Phosphothreonine is present on threonine 1671. Serine 1673 bears the Phosphoserine mark. At threonine 1676 the chain carries Phosphothreonine. Residues 1704 to 1762 form a disordered region; that stretch reads ILRPGPSPNPTAVQNENLKSMAHKRSQRSSYTRLSKDASELHAASSESTGFGEERESIL. Positions 1757–1762 match the PDZ-binding motif; sequence ERESIL.

In terms of assembly, found in a complex, at least composed of KIDINS220, MAGI2, NTRK1 and RAPGEF2; the complex is mainly formed at late endosomes in a nerve growth factor (NGF)-dependent manner. Interacts with RAPGEF2; the interaction is strengthened after NGF stimulation. Isoform 2 interacts (via C-terminal domain) with MAGI2 isoform 1 (via PDZ domain). Interacts with NTRK1, NTRK2, NTRK3, ERKL and NGFR. Can form a ternary complex with NGFR and NTRK1 and this complex is affected by the expression levels of KIDINS220/ARMS. An increase in KIDINS220/ARMS expression leads to a decreased association of NGFR and NTRK1. Interacts (via PDZ-binding motif) with SNTA1 and SNTB2 (via PDZ domains). Interacts with EPHA4 and PRKD1. In terms of processing, tyrosine phosphorylated by NTRK1, NTRK2, EPHB2 and EPHA4. Phosphorylation at Ser-918 is induced by phorbol ester treatment. Phosphorylation by NTRK2 is induced by brain-derived neurotrophic factor (BDNF) and neurotrophin-4/5. Phosphorylation by NTRK1 is induced by nerve growth factor (NGF). Expressed in developing nervous system and in highly plastic areas of the adult brain. Also expressed in neuroendocrine cells, where it concentrates at the tip of neurites. Expressed in developing muscle and is concentrated at the neuromuscular junction (NMS). SNTA1 can regulate its localization in the NMS.

It localises to the membrane. It is found in the late endosome. Functionally, promotes a prolonged MAP-kinase signaling by neurotrophins through activation of a Rap1-dependent mechanism. Provides a docking site for the CRKL-C3G complex, resulting in Rap1-dependent sustained ERK activation. May play an important role in regulating postsynaptic signal transduction through the syntrophin-mediated localization of receptor tyrosine kinases such as EPHA4. In cooperation with SNTA1 can enhance EPHA4-induced JAK/STAT activation. Plays a role in nerve growth factor (NGF)-induced recruitment of RAPGEF2 to late endosomes and neurite outgrowth. May play a role in neurotrophin- and ephrin-mediated neuronal outgrowth and in axon guidance during neural development and in neuronal regeneration. The sequence is that of Kinase D-interacting substrate of 220 kDa (Kidins220) from Rattus norvegicus (Rat).